A 648-amino-acid chain; its full sequence is MTINHLILQNLKKNLKNYYLYVFALMFSVALYFAFVTLQYDPAMDDVQEGIKGAAAMKTASVLLVVIVTTFLLYANNIFIKRRSKEIGLFQMIGMTKGKVFRILSAENLILYFGSLAGGVFIGFAISKVVTMILFKLTGLDRIATLSFSVPALVQTVIVFTLIYGLILLANYLFVKQQTILSLFHVTSSSEDRVKKVSLFDIIIGSLGIVSILVGYFVSSKLFGGTFTSMETLFIAMIFILGSVIIGTYFFYKGSVTFLFNLIRKKKNGHLAVRDVLSLSSIMFRMKSNALILTIITTISGLAIGLLSLSYISYYSAEKTAEHYVPSDFTLTDMEDAAYFKEALDAHGIAYDETVIDVLIAEVYVKDILEEPLDGVNFDSDIMILPVIRDTAVESVNVAPEEAAFTGYNDMMQQFMSLKDSGSIELRGKQKVIPQNYIGLHSEYLVSTYFSSGGLPLAIVNETTFSQLQDDINPEIQLDSSVHIGIDIKDARQLQEAVVLFHETPFTSETPQYAQVEMSQSQKQTFGLAMFIVGFLGLTFLITSGCILYFKQMDESEEEKGSYTILRKLGFTQGDLLKGIRVKQVFNFGIPLLLGLSHSYFAVKSGWFFFGNELWTPMIMVMLLYTALYSIFAILSVLYYKKVIKDAL.

Helical transmembrane passes span 18 to 38 (YYLY…FVTL), 60 to 80 (ASVL…NIFI), 110 to 130 (ILYF…SKVV), 150 to 170 (VPAL…ILLA), 199 to 219 (LFDI…YFVS), 232 to 252 (TLFI…YFFY), 290 to 310 (ALIL…LSLS), 528 to 548 (LAMF…GCIL), 590 to 610 (IPLL…WFFF), and 618 to 638 (MIMV…LSVL).

It belongs to the ABC-4 integral membrane protein family. As to quaternary structure, the complex is composed of two ATP-binding proteins (BceA) and two transmembrane proteins (BceB).

Its subcellular location is the cell membrane. Its function is as follows. Part of the ABC transporter complex BceAB (TC 3.A.1.123.5) involved in bacitracin export. This Halalkalibacterium halodurans (strain ATCC BAA-125 / DSM 18197 / FERM 7344 / JCM 9153 / C-125) (Bacillus halodurans) protein is Bacitracin export permease protein BceB (bceB).